The primary structure comprises 487 residues: ATP synthase subunit beta 1 (487 aa).

An ATP-binding site is contributed by 162–169; the sequence is GGAGVGKT.

It belongs to the ATPase alpha/beta chains family. F-type ATPases have 2 components, CF(1) - the catalytic core - and CF(0) - the membrane proton channel. CF(1) has five subunits: alpha(3), beta(3), gamma(1), delta(1), epsilon(1). CF(0) has three main subunits: a(1), b(2) and c(9-12). The alpha and beta chains form an alternating ring which encloses part of the gamma chain. CF(1) is attached to CF(0) by a central stalk formed by the gamma and epsilon chains, while a peripheral stalk is formed by the delta and b chains.

It localises to the cell inner membrane. It catalyses the reaction ATP + H2O + 4 H(+)(in) = ADP + phosphate + 5 H(+)(out). Its function is as follows. Produces ATP from ADP in the presence of a proton gradient across the membrane. The catalytic sites are hosted primarily by the beta subunits. This Gluconobacter oxydans (strain 621H) (Gluconobacter suboxydans) protein is ATP synthase subunit beta 1.